Here is a 199-residue protein sequence, read N- to C-terminus: Chorismate pyruvate-lyase (199 aa).

Belongs to the chorismate pyruvate-lyase type 2 family.

The catalysed reaction is chorismate = 4-hydroxybenzoate + pyruvate. Functionally, removes the pyruvyl group from chorismate to provide 4-hydroxybenzoate (4HB). Involved in the synthesis of glycosylated p-hydroxybenzoic acid methyl esters (p-HBADs) and phenolic glycolipids (PGL) that play important roles in the pathogenesis of mycobacterial infections. The protein is Chorismate pyruvate-lyase of Mycobacterium bovis (strain ATCC BAA-935 / AF2122/97).